Reading from the N-terminus, the 240-residue chain is Keratinocyte-associated protein 3 (240 aa).

Helical transmembrane passes span 21–41 (VGLA…VLHG), 63–83 (VISV…LLAS), 95–115 (LLAL…GLLL), and 163–183 (ALAL…LSGY).

Belongs to the TMEM54 family.

The protein localises to the membrane. This is Keratinocyte-associated protein 3 (KRTCAP3) from Bos taurus (Bovine).